Reading from the N-terminus, the 548-residue chain is Glycosyl hydrolase family 109 protein 3 (548 aa).

An N-terminal signal peptide occupies residues 1–21 (MKLKKLLLSVLMLLSISGLQA). NAD(+) is bound by residues 71-72 (MR), aspartate 93, 141-144 (WNHH), 161-162 (EV), and asparagine 190. Tyrosine 219 lines the substrate pocket. An NAD(+)-binding site is contributed by 240 to 244 (DNLHW). Residues arginine 245, 257–260 (YATH), and tyrosine 335 each bind substrate. Tyrosine 257 contributes to the NAD(+) binding site.

Belongs to the Gfo/Idh/MocA family. Glycosyl hydrolase 109 subfamily. It depends on NAD(+) as a cofactor.

In terms of biological role, glycosidase. This is Glycosyl hydrolase family 109 protein 3 from Phocaeicola vulgatus (strain ATCC 8482 / DSM 1447 / JCM 5826 / CCUG 4940 / NBRC 14291 / NCTC 11154) (Bacteroides vulgatus).